Reading from the N-terminus, the 250-residue chain is Triosephosphate isomerase (250 aa).

Position 9–11 (9–11 (NWK)) interacts with substrate. His-94 serves as the catalytic Electrophile. The active-site Proton acceptor is the Glu-166. Substrate is bound by residues Gly-172, Ser-212, and 233-234 (GG).

The protein belongs to the triosephosphate isomerase family. Homodimer.

The protein localises to the cytoplasm. The enzyme catalyses D-glyceraldehyde 3-phosphate = dihydroxyacetone phosphate. Its pathway is carbohydrate biosynthesis; gluconeogenesis. The protein operates within carbohydrate degradation; glycolysis; D-glyceraldehyde 3-phosphate from glycerone phosphate: step 1/1. Functionally, involved in the gluconeogenesis. Catalyzes stereospecifically the conversion of dihydroxyacetone phosphate (DHAP) to D-glyceraldehyde-3-phosphate (G3P). The protein is Triosephosphate isomerase of Clostridium novyi (strain NT).